We begin with the raw amino-acid sequence, 125 residues long: Small ribosomal subunit protein uS12 (125 aa).

Aspartate 89 carries the post-translational modification 3-methylthioaspartic acid. A disordered region spans residues 105–125 (AGVKDRKQARSKYGAKRPKAA). Residues 113–125 (ARSKYGAKRPKAA) are compositionally biased toward basic residues.

This sequence belongs to the universal ribosomal protein uS12 family. In terms of assembly, part of the 30S ribosomal subunit. Contacts proteins S8 and S17. May interact with IF1 in the 30S initiation complex.

With S4 and S5 plays an important role in translational accuracy. Its function is as follows. Interacts with and stabilizes bases of the 16S rRNA that are involved in tRNA selection in the A site and with the mRNA backbone. Located at the interface of the 30S and 50S subunits, it traverses the body of the 30S subunit contacting proteins on the other side and probably holding the rRNA structure together. The combined cluster of proteins S8, S12 and S17 appears to hold together the shoulder and platform of the 30S subunit. The chain is Small ribosomal subunit protein uS12 from Methylobacillus flagellatus (strain ATCC 51484 / DSM 6875 / VKM B-1610 / KT).